A 445-amino-acid polypeptide reads, in one-letter code: 3-phosphoshikimate 1-carboxyvinyltransferase (445 aa).

Residues 1 to 24 are disordered; sequence MEHAATLPQTSRRPATPLTGTITV. Residues 7 to 22 are compositionally biased toward polar residues; the sequence is LPQTSRRPATPLTGTI. Positions 28, 29, and 33 each coordinate 3-phosphoshikimate. Lysine 28 contributes to the phosphoenolpyruvate binding site. Residues glycine 101 and arginine 129 each contribute to the phosphoenolpyruvate site. Positions 174, 176, 326, and 353 each coordinate 3-phosphoshikimate. Glutamine 176 is a phosphoenolpyruvate binding site. Aspartate 326 serves as the catalytic Proton acceptor. Residues arginine 357 and arginine 399 each coordinate phosphoenolpyruvate.

This sequence belongs to the EPSP synthase family. Monomer.

The protein localises to the cytoplasm. The catalysed reaction is 3-phosphoshikimate + phosphoenolpyruvate = 5-O-(1-carboxyvinyl)-3-phosphoshikimate + phosphate. Its pathway is metabolic intermediate biosynthesis; chorismate biosynthesis; chorismate from D-erythrose 4-phosphate and phosphoenolpyruvate: step 6/7. In terms of biological role, catalyzes the transfer of the enolpyruvyl moiety of phosphoenolpyruvate (PEP) to the 5-hydroxyl of shikimate-3-phosphate (S3P) to produce enolpyruvyl shikimate-3-phosphate and inorganic phosphate. The sequence is that of 3-phosphoshikimate 1-carboxyvinyltransferase from Acidiphilium cryptum (strain JF-5).